A 369-amino-acid polypeptide reads, in one-letter code: GTPase Obg (369 aa).

Residues 1–158 form the Obg domain; sequence MFTDVVELTV…RRIKLDLKLI (158 aa). The segment at 126-146 is disordered; sequence NTHFKSSTNQRPTYAQPGEKG. Over residues 128-138 the composition is skewed to polar residues; sequence HFKSSTNQRPT. One can recognise an OBG-type G domain in the interval 159-362; sequence ADVGLVGFPN…LKHALFNLVQ (204 aa). Residues 165 to 172, 190 to 194, 212 to 215, 280 to 283, and 343 to 345 each bind GTP; these read GFPNVGKS, FTTLT, DIPG, TRAD, and SSA. Ser-172 and Thr-192 together coordinate Mg(2+).

The protein belongs to the TRAFAC class OBG-HflX-like GTPase superfamily. OBG GTPase family. Monomer. The cofactor is Mg(2+).

The protein resides in the cytoplasm. An essential GTPase which binds GTP, GDP and possibly (p)ppGpp with moderate affinity, with high nucleotide exchange rates and a fairly low GTP hydrolysis rate. Plays a role in control of the cell cycle, stress response, ribosome biogenesis and in those bacteria that undergo differentiation, in morphogenesis control. The protein is GTPase Obg of Sulfurimonas denitrificans (strain ATCC 33889 / DSM 1251) (Thiomicrospira denitrificans (strain ATCC 33889 / DSM 1251)).